Reading from the N-terminus, the 152-residue chain is Small ribosomal subunit protein bS16 (152 aa).

A disordered region spans residues 84 to 152 (WKWEASNNPQ…EAAAEEEKSE (69 aa)). A compositionally biased stretch (basic and acidic residues) spans 97–123 (PGQKAKELAAEKAEKEADRKAAEEEAK). Over residues 124–144 (AAAAAPAAEEAPAEEAPAAEA) the composition is skewed to low complexity.

Belongs to the bacterial ribosomal protein bS16 family.

In Maricaulis maris (strain MCS10) (Caulobacter maris), this protein is Small ribosomal subunit protein bS16.